The sequence spans 206 residues: Glycerol-3-phosphate acyltransferase (206 aa).

The next 5 membrane-spanning stretches (helical) occupy residues 14 to 34 (IALAAAVIGYLLGSIPFGLIL), 67 to 87 (ATLLLDALKASAAAWIVGYFL), 91 to 111 (AAIIAGFFAFIGHLFPVWIGF), 124 to 144 (LLGVAPIMVVLFAAVWLAVAV), and 148 to 168 (YSSLSALVAMLVIPVALLILG).

The protein belongs to the PlsY family. As to quaternary structure, probably interacts with PlsX.

It is found in the cell inner membrane. It catalyses the reaction an acyl phosphate + sn-glycerol 3-phosphate = a 1-acyl-sn-glycero-3-phosphate + phosphate. It functions in the pathway lipid metabolism; phospholipid metabolism. Functionally, catalyzes the transfer of an acyl group from acyl-phosphate (acyl-PO(4)) to glycerol-3-phosphate (G3P) to form lysophosphatidic acid (LPA). This enzyme utilizes acyl-phosphate as fatty acyl donor, but not acyl-CoA or acyl-ACP. This is Glycerol-3-phosphate acyltransferase from Rhizobium etli (strain ATCC 51251 / DSM 11541 / JCM 21823 / NBRC 15573 / CFN 42).